Consider the following 475-residue polypeptide: UDP-N-acetylmuramate--L-alanine ligase (475 aa).

An ATP-binding site is contributed by 125-131; sequence GTHGKTT.

It belongs to the MurCDEF family.

It is found in the cytoplasm. The enzyme catalyses UDP-N-acetyl-alpha-D-muramate + L-alanine + ATP = UDP-N-acetyl-alpha-D-muramoyl-L-alanine + ADP + phosphate + H(+). It functions in the pathway cell wall biogenesis; peptidoglycan biosynthesis. Functionally, cell wall formation. The chain is UDP-N-acetylmuramate--L-alanine ligase from Glaesserella parasuis serovar 5 (strain SH0165) (Haemophilus parasuis).